Consider the following 407-residue polypeptide: MNFIITTRDFSNDDSVLRAAEMRDNVAGSISKAYKGTVRAEGKKKLLLKHLPVPPGGCSRRNSNLFVFCTERDYRKFHQGIAQLKRAPAELDPHEIQQVTASIRCRLQPSLREPPTPADELQTAVSRVCALFNQLVFTAQLRHYCEHQDKVVSYARDELTKRCGEKSALGVEVHQLVALLPHERHRELCHVLIGLLHQTPHMWARSIRLIGHLRHYLQNSFLHLLMNSGLDIAQVFDGCYHSEAYRMLFQIGHTDSVSAALELSHSAAAGPPEADENNDEGEEDDDELRHSDPAPLHDSKKPRNARRPRTRVPPHEQKPEENEEEEEELFPSCKATAAFLRAEPSVSNDDGNGGERCDTLATALRHRADEEDGPLASQTSVRVAATPSPSVTSALTPVTSPITPLCI.

Residues 268 to 330 (AAGPPEADEN…ENEEEEEELF (63 aa)) are disordered. The segment covering 273 to 286 (EADENNDEGEEDDD) has biased composition (acidic residues). The segment covering 287 to 301 (ELRHSDPAPLHDSKK) has biased composition (basic and acidic residues). The span at 302 to 312 (PRNARRPRTRV) shows a compositional bias: basic residues.

The protein belongs to the HHV-5 UL34 protein family.

It localises to the host nucleus. Its function is as follows. Acts as a transcriptional repressor of the US3 gene expression through a specific DNA sequence named the transcriptional repressive element (tre). The polypeptide is Transcriptional regulator UL34 (UL34) (Homo sapiens (Human)).